Here is a 69-residue protein sequence, read N- to C-terminus: uncharacterized protein (69 aa).

The Cytoplasmic portion of the chain corresponds to 1 to 15 (MLLYIVIIVACIISK). A helical transmembrane segment spans residues 16–36 (LVPNEYWAIHLFFIIMIFMVY). The Extracellular portion of the chain corresponds to 37-69 (MYKKLDIHQKYQFWNYTMSGLSGHNVQVTCKCY). Residue Asn51 is glycosylated (N-linked (GlcNAc...) asparagine; by host).

This sequence belongs to the asfivirus X69R family.

It localises to the host membrane. This is an uncharacterized protein from African swine fever virus (isolate Tick/Malawi/Lil 20-1/1983) (ASFV).